Here is a 298-residue protein sequence, read N- to C-terminus: Probable pyridoxal 5'-phosphate synthase subunit SNZ3 (298 aa).

Asp-21 provides a ligand contact to D-ribose 5-phosphate. Lys-78 (schiff-base intermediate with D-ribose 5-phosphate) is an active-site residue. Residues Gly-150, Gly-213, and 234–235 contribute to the D-ribose 5-phosphate site; that span reads GS.

The protein belongs to the PdxS/SNZ family. Homohexamer. Interacts with THI11.

It catalyses the reaction aldehydo-D-ribose 5-phosphate + D-glyceraldehyde 3-phosphate + L-glutamine = pyridoxal 5'-phosphate + L-glutamate + phosphate + 3 H2O + H(+). It functions in the pathway cofactor biosynthesis; pyridoxal 5'-phosphate biosynthesis. In terms of biological role, catalyzes the formation of pyridoxal 5'-phosphate from ribose 5-phosphate (RBP), glyceraldehyde 3-phosphate (G3P) and ammonia. The ammonia is provided by a SNO isoform. Can also use ribulose 5-phosphate and dihydroxyacetone phosphate as substrates, resulting from enzyme-catalyzed isomerization of RBP and G3P, respectively. The protein is Probable pyridoxal 5'-phosphate synthase subunit SNZ3 (SNZ3) of Saccharomyces cerevisiae (strain ATCC 204508 / S288c) (Baker's yeast).